A 211-amino-acid polypeptide reads, in one-letter code: Thiamine-phosphate synthase (211 aa).

Residues 37 to 41 (QLREK) and asparagine 69 contribute to the 4-amino-2-methyl-5-(diphosphooxymethyl)pyrimidine site. Mg(2+)-binding residues include aspartate 70 and glutamate 89. Serine 108 serves as a coordination point for 4-amino-2-methyl-5-(diphosphooxymethyl)pyrimidine. 134–136 (TTT) serves as a coordination point for 2-[(2R,5Z)-2-carboxy-4-methylthiazol-5(2H)-ylidene]ethyl phosphate. Lysine 137 contacts 4-amino-2-methyl-5-(diphosphooxymethyl)pyrimidine. Residues glycine 163 and 183–184 (VS) each bind 2-[(2R,5Z)-2-carboxy-4-methylthiazol-5(2H)-ylidene]ethyl phosphate.

This sequence belongs to the thiamine-phosphate synthase family. Mg(2+) is required as a cofactor.

It catalyses the reaction 2-[(2R,5Z)-2-carboxy-4-methylthiazol-5(2H)-ylidene]ethyl phosphate + 4-amino-2-methyl-5-(diphosphooxymethyl)pyrimidine + 2 H(+) = thiamine phosphate + CO2 + diphosphate. The enzyme catalyses 2-(2-carboxy-4-methylthiazol-5-yl)ethyl phosphate + 4-amino-2-methyl-5-(diphosphooxymethyl)pyrimidine + 2 H(+) = thiamine phosphate + CO2 + diphosphate. It carries out the reaction 4-methyl-5-(2-phosphooxyethyl)-thiazole + 4-amino-2-methyl-5-(diphosphooxymethyl)pyrimidine + H(+) = thiamine phosphate + diphosphate. It participates in cofactor biosynthesis; thiamine diphosphate biosynthesis; thiamine phosphate from 4-amino-2-methyl-5-diphosphomethylpyrimidine and 4-methyl-5-(2-phosphoethyl)-thiazole: step 1/1. Functionally, condenses 4-methyl-5-(beta-hydroxyethyl)thiazole monophosphate (THZ-P) and 2-methyl-4-amino-5-hydroxymethyl pyrimidine pyrophosphate (HMP-PP) to form thiamine monophosphate (TMP). This Enterococcus faecalis (strain ATCC 700802 / V583) protein is Thiamine-phosphate synthase.